Consider the following 581-residue polypeptide: Threonine--tRNA ligase (581 aa).

Residues 185 to 478 (DHRKLGKELD…LIEHYGGAFP (294 aa)) are catalytic. Residues Cys-278, His-329, and His-455 each contribute to the Zn(2+) site.

It belongs to the class-II aminoacyl-tRNA synthetase family. Homodimer. It depends on Zn(2+) as a cofactor.

It localises to the cytoplasm. It catalyses the reaction tRNA(Thr) + L-threonine + ATP = L-threonyl-tRNA(Thr) + AMP + diphosphate + H(+). Functionally, catalyzes the attachment of threonine to tRNA(Thr) in a two-step reaction: L-threonine is first activated by ATP to form Thr-AMP and then transferred to the acceptor end of tRNA(Thr). Also edits incorrectly charged L-seryl-tRNA(Thr). The chain is Threonine--tRNA ligase from Borreliella afzelii (strain PKo) (Borrelia afzelii).